Reading from the N-terminus, the 224-residue chain is Ribosomal RNA large subunit methyltransferase E (224 aa).

The S-adenosyl-L-methionine site is built by G60, W62, D93, D109, and D137. Catalysis depends on K177, which acts as the Proton acceptor.

Belongs to the class I-like SAM-binding methyltransferase superfamily. RNA methyltransferase RlmE family.

Its subcellular location is the cytoplasm. The enzyme catalyses uridine(2552) in 23S rRNA + S-adenosyl-L-methionine = 2'-O-methyluridine(2552) in 23S rRNA + S-adenosyl-L-homocysteine + H(+). Functionally, specifically methylates the uridine in position 2552 of 23S rRNA at the 2'-O position of the ribose in the fully assembled 50S ribosomal subunit. This chain is Ribosomal RNA large subunit methyltransferase E, found in Polynucleobacter asymbioticus (strain DSM 18221 / CIP 109841 / QLW-P1DMWA-1) (Polynucleobacter necessarius subsp. asymbioticus).